A 1024-amino-acid polypeptide reads, in one-letter code: Beta-galactosidase (1024 aa).

Residues asparagine 103 and aspartate 202 each coordinate substrate. Na(+) is bound at residue aspartate 202. Residues glutamate 417, histidine 419, and glutamate 462 each coordinate Mg(2+). Residues glutamate 462 and 538 to 541 contribute to the substrate site; that span reads EYAH. Residue glutamate 462 is the Proton donor of the active site. Glutamate 538 serves as the catalytic Nucleophile. Position 598 (asparagine 598) interacts with Mg(2+). Na(+) contacts are provided by phenylalanine 602 and asparagine 605. 2 residues coordinate substrate: asparagine 605 and tryptophan 1000.

The protein belongs to the glycosyl hydrolase 2 family. In terms of assembly, homotetramer. It depends on Mg(2+) as a cofactor. The cofactor is Na(+).

The enzyme catalyses Hydrolysis of terminal non-reducing beta-D-galactose residues in beta-D-galactosides.. The protein is Beta-galactosidase of Escherichia coli (strain UTI89 / UPEC).